A 372-amino-acid chain; its full sequence is MAEAAVASTVTLPVSGGWTKHVTCRYFMHGLCKEGDNCRYSHDLTNSKPAAMICKFFQKGNCVFGERCRFDHCKPTKNEEFSSPQMLPPSSPSPSTDPESSQPAPRPKTQDWANAAEFVPGQPYCGRAESVKVEISIPLIEELDCDAAVDKEALRKQLCPYAAVGECRYGINCAYLHGDVCDMCGLQVLHPTDNSQRSQHTKACIEAHEKDMEISFAIQRSKDMMCGVCMEVVFEKANPSERRFGILSNCNHCYCLKCIRKWRSAKQFESKIIKSCPECRITSNFVIPSEYWVEDKEDKQKLIQKYKDGMGRKPCRYFDEGRGICPFGANCFYKHAFPDGRLEEAQPQRRQTGSSSRNRLSEMLLMLLAAGD.

C3H1-type zinc fingers lie at residues 20-45 and 48-75; these read KHVT…HDLT and KPAA…HCKP. The tract at residues 78–110 is disordered; it reads NEEFSSPQMLPPSSPSPSTDPESSQPAPRPKTQ. The segment covering 93–103 has biased composition (low complexity); sequence SPSTDPESSQP. A C3H1-type 3 zinc finger spans residues 153–180; sequence ALRKQLCPYAAVGECRYGINCAYLHGDV. Positions 181–208 are makorin-type Cys-His; it reads CDMCGLQVLHPTDNSQRSQHTKACIEAH. Residues 226 to 280 form an RING-type zinc finger; that stretch reads CGVCMEVVFEKANPSERRFGILSNCNHCYCLKCIRKWRSAKQFESKIIKSCPECR. A C3H1-type 4 zinc finger spans residues 309–338; sequence GMGRKPCRYFDEGRGICPFGANCFYKHAFP.

It carries out the reaction S-ubiquitinyl-[E2 ubiquitin-conjugating enzyme]-L-cysteine + [acceptor protein]-L-lysine = [E2 ubiquitin-conjugating enzyme]-L-cysteine + N(6)-ubiquitinyl-[acceptor protein]-L-lysine.. Its pathway is protein modification; protein ubiquitination. Functionally, E3 ubiquitin ligase catalyzing the covalent attachment of ubiquitin moieties onto substrate proteins. The protein is Probable E3 ubiquitin-protein ligase makorin-1 of Tetraodon nigroviridis (Spotted green pufferfish).